Here is a 162-residue protein sequence, read N- to C-terminus: Regulator of sigma D (162 aa).

It belongs to the Rsd/AlgQ family. Interacts with RpoD.

The protein resides in the cytoplasm. Functionally, binds RpoD and negatively regulates RpoD-mediated transcription activation by preventing the interaction between the primary sigma factor RpoD with the catalytic core of the RNA polymerase and with promoter DNA. May be involved in replacement of the RNA polymerase sigma subunit from RpoD to RpoS during the transition from exponential growth to the stationary phase. This is Regulator of sigma D from Salmonella arizonae (strain ATCC BAA-731 / CDC346-86 / RSK2980).